A 245-amino-acid polypeptide reads, in one-letter code: MSQVNMRDMLKAGVHFGHQTRYWNPKMGKYIFGARNKIHIINLEKTLPMFNEALTFVERLAQGKNKILFVGTKRSAGKIVAEEAARCGSPYVDHRWLGGMLTNFKTIRASIKRLRDLEVQAEDGTFAKLTKKEALMRSRDLEKLDRSLGGIKDMGGLPDALFVIDVDHERIAITEANKLGIPVIGVVDTNSSPEGVDYIIPGNDDAIRAIQLYMGSMADAVIRGRNHVAGGTEQFVEEAPVAAAE.

The protein belongs to the universal ribosomal protein uS2 family.

The polypeptide is Small ribosomal subunit protein uS2 (Pseudomonas fluorescens (strain SBW25)).